A 464-amino-acid polypeptide reads, in one-letter code: Arabinose-proton symporter (464 aa).

Helical transmembrane passes span 21 to 43, 63 to 85, 92 to 111, 116 to 138, 150 to 172, 185 to 207, 266 to 288, 303 to 325, 332 to 354, 364 to 386, 398 to 420, and 424 to 446; these read GFVI…DTAV, GLVI…FLSD, ILMT…ALSQ, LIIA…VTYI, LSSL…NLAV, GWRW…LLVV, ALVI…ITYY, GFVT…VLLI, KLMS…SFYF, VLIL…IMIS, AGIA…PMMI, and GLAY…VVTI.

Belongs to the major facilitator superfamily. Sugar transporter (TC 2.A.1.1) family.

It localises to the cell membrane. The catalysed reaction is L-arabinose(in) + H(+)(in) = L-arabinose(out) + H(+)(out). It catalyses the reaction D-galactose(in) + H(+)(in) = D-galactose(out) + H(+)(out). It carries out the reaction D-xylose(in) + H(+)(in) = D-xylose(out) + H(+)(out). In terms of biological role, uptake of L-arabinose across the cytoplasmic membrane with the concomitant transport of protons into the cell (symport system). In the presence of inducing amounts of L-arabinose, can import both D-galactose and D-xylose. Can also transport the disaccharide alpha-1,5-arabinobiose. The chain is Arabinose-proton symporter (araE) from Bacillus subtilis (strain 168).